A 172-amino-acid polypeptide reads, in one-letter code: Neuropeptide-like protein nlp-8 (172 aa).

Positions 1 to 26 are cleaved as a signal peptide; it reads MSQKLLPISPLQLLFLQCLLIGFTAA.

In terms of processing, may be processed by convertase egl-3.

It localises to the secreted. Neuropeptide-like protein. Plays a role in behaviors associated with a sleep-like state induced by stress (SIS), acting in concert with the FARP (FMRFamide related) peptides, flp-13 and flp-24. This is Neuropeptide-like protein nlp-8 from Caenorhabditis elegans.